The following is a 389-amino-acid chain: Probable nitrate transporter NarT (389 aa).

The next 12 membrane-spanning stretches (helical) occupy residues 14–34 (TLSL…MPFI), 45–65 (ISII…PFGY), 69–89 (IVGA…PIFF), 97–117 (GMLM…SVGV), 139–159 (GNIG…IIGW), 161–181 (TTVR…FIFG), 211–231 (WYFI…NYLV), 246–266 (GVFI…GDKF), 268–288 (AVKV…ILGI), 294–314 (LFTV…GLIF), 331–351 (IVSM…TYVA), and 353–373 (LTGS…IALF).

This sequence belongs to the major facilitator superfamily. Nitrate/nitrite porter (TC 2.A.1.8) family.

The protein localises to the cell membrane. Probably required for nitrate uptake under anoxic conditions. Also possibly involved in excretion of nitrite produced by the dissimilatory reduction of nitrate. This chain is Probable nitrate transporter NarT (narT), found in Staphylococcus aureus (strain JH9).